The chain runs to 617 residues: Chaperone protein DnaK (617 aa).

Positions 579–617 are disordered; sequence KAQQEAQQASGEAGSADARGPDETVVDADYEVVDDEKRK. Over residues 580-594 the composition is skewed to low complexity; that stretch reads AQQEAQQASGEAGSA. The span at 602-617 shows a compositional bias: acidic residues; that stretch reads TVVDADYEVVDDEKRK.

It belongs to the heat shock protein 70 family.

Acts as a chaperone. The protein is Chaperone protein DnaK of Methanosarcina acetivorans (strain ATCC 35395 / DSM 2834 / JCM 12185 / C2A).